A 667-amino-acid polypeptide reads, in one-letter code: Long-chain-fatty-acid--CoA ligase ACSBG2 (667 aa).

Residues 227 to 235, 418 to 423, aspartate 496, arginine 511, and arginine 624 each bind ATP; these read TSGTTGTPK and EIYGMS.

The protein belongs to the ATP-dependent AMP-binding enzyme family. Bubblegum subfamily. In terms of tissue distribution, testis- and brainstem-specific. Expressed in pubertal and adult testis. Enriched in germ cells and Sertoli cells while present at a lower level in Leydig cells. Present in testicular Sertoli cells and large motoneurons in the medulla oblongata and cervical spinal cord (at protein level).

The protein resides in the cytoplasm. It is found in the membrane. The enzyme catalyses a long-chain fatty acid + ATP + CoA = a long-chain fatty acyl-CoA + AMP + diphosphate. It carries out the reaction (5Z,8Z,11Z,14Z)-eicosatetraenoate + ATP + CoA = (5Z,8Z,11Z,14Z)-eicosatetraenoyl-CoA + AMP + diphosphate. The catalysed reaction is hexadecanoate + ATP + CoA = hexadecanoyl-CoA + AMP + diphosphate. It catalyses the reaction (9Z)-octadecenoate + ATP + CoA = (9Z)-octadecenoyl-CoA + AMP + diphosphate. The enzyme catalyses (9Z,12Z)-octadecadienoate + ATP + CoA = (9Z,12Z)-octadecadienoyl-CoA + AMP + diphosphate. It carries out the reaction tetracosanoate + ATP + CoA = tetracosanoyl-CoA + AMP + diphosphate. Functionally, catalyzes the conversion of fatty acids such as long chain and very long-chain fatty acids to their active form acyl-CoAs for both synthesis of cellular lipids, and degradation via beta-oxidation. Can activate diverse saturated, monosaturated and polyunsaturated fatty acids. Has increased ability to activate oleic and linoleic acid. May play a role in spermatogenesis. This chain is Long-chain-fatty-acid--CoA ligase ACSBG2, found in Mus musculus (Mouse).